The primary structure comprises 148 residues: Glutamyl-tRNA(Gln) amidotransferase subunit C, mitochondrial (148 aa).

This sequence belongs to the GatC family. As to quaternary structure, subunit of the heterotrimeric GatCAB amidotransferase (AdT) complex, composed of A, B and C subunits.

The protein resides in the mitochondrion. The catalysed reaction is L-glutamyl-tRNA(Gln) + L-glutamine + ATP + H2O = L-glutaminyl-tRNA(Gln) + L-glutamate + ADP + phosphate + H(+). Functionally, allows the formation of correctly charged Gln-tRNA(Gln) through the transamidation of misacylated Glu-tRNA(Gln) in the mitochondria. The reaction takes place in the presence of glutamine and ATP through an activated gamma-phospho-Glu-tRNA(Gln). The sequence is that of Glutamyl-tRNA(Gln) amidotransferase subunit C, mitochondrial from Drosophila sechellia (Fruit fly).